The sequence spans 110 residues: Chagasin (110 aa).

The short motif at 29–34 (NPTTGF) is the BC loop element. The short motif at 59-68 (PPDSKLLGAG) is the DE loop element. The short motif at 91 to 100 (RPWTGPSHDS) is the FG loop element.

This sequence belongs to the protease inhibitor I42 family. In terms of assembly, interacts with cruzipain.

The protein resides in the flagellar pocket. It is found in the cytoplasmic vesicle. It localises to the cell surface. In terms of biological role, cysteine protease inhibitor. Inhibits cysteine protease cruzipain. The polypeptide is Chagasin (cha) (Trypanosoma cruzi).